We begin with the raw amino-acid sequence, 239 residues long: Pyridoxine 5'-phosphate synthase (239 aa).

Asn7 contributes to the 3-amino-2-oxopropyl phosphate binding site. Residue 9–10 (DH) coordinates 1-deoxy-D-xylulose 5-phosphate. Position 18 (Arg18) interacts with 3-amino-2-oxopropyl phosphate. His43 functions as the Proton acceptor in the catalytic mechanism. 1-deoxy-D-xylulose 5-phosphate-binding residues include Arg45 and His50. Catalysis depends on Glu70, which acts as the Proton acceptor. Thr100 contributes to the 1-deoxy-D-xylulose 5-phosphate binding site. His191 serves as the catalytic Proton donor. 3-amino-2-oxopropyl phosphate contacts are provided by residues Gly192 and 213-214 (GH).

Belongs to the PNP synthase family. In terms of assembly, homooctamer; tetramer of dimers.

The protein resides in the cytoplasm. It carries out the reaction 3-amino-2-oxopropyl phosphate + 1-deoxy-D-xylulose 5-phosphate = pyridoxine 5'-phosphate + phosphate + 2 H2O + H(+). It participates in cofactor biosynthesis; pyridoxine 5'-phosphate biosynthesis; pyridoxine 5'-phosphate from D-erythrose 4-phosphate: step 5/5. Its function is as follows. Catalyzes the complicated ring closure reaction between the two acyclic compounds 1-deoxy-D-xylulose-5-phosphate (DXP) and 3-amino-2-oxopropyl phosphate (1-amino-acetone-3-phosphate or AAP) to form pyridoxine 5'-phosphate (PNP) and inorganic phosphate. The polypeptide is Pyridoxine 5'-phosphate synthase (Geotalea daltonii (strain DSM 22248 / JCM 15807 / FRC-32) (Geobacter daltonii)).